We begin with the raw amino-acid sequence, 221 residues long: Thiamine-phosphate synthase (221 aa).

4-amino-2-methyl-5-(diphosphooxymethyl)pyrimidine is bound by residues 39–43 and N76; that span reads QLRCK. Mg(2+) contacts are provided by D77 and D96. S114 contacts 4-amino-2-methyl-5-(diphosphooxymethyl)pyrimidine. 140–142 contacts 2-[(2R,5Z)-2-carboxy-4-methylthiazol-5(2H)-ylidene]ethyl phosphate; sequence TPT. K143 is a 4-amino-2-methyl-5-(diphosphooxymethyl)pyrimidine binding site. A 2-[(2R,5Z)-2-carboxy-4-methylthiazol-5(2H)-ylidene]ethyl phosphate-binding site is contributed by G171.

It belongs to the thiamine-phosphate synthase family. The cofactor is Mg(2+).

The enzyme catalyses 2-[(2R,5Z)-2-carboxy-4-methylthiazol-5(2H)-ylidene]ethyl phosphate + 4-amino-2-methyl-5-(diphosphooxymethyl)pyrimidine + 2 H(+) = thiamine phosphate + CO2 + diphosphate. The catalysed reaction is 2-(2-carboxy-4-methylthiazol-5-yl)ethyl phosphate + 4-amino-2-methyl-5-(diphosphooxymethyl)pyrimidine + 2 H(+) = thiamine phosphate + CO2 + diphosphate. It carries out the reaction 4-methyl-5-(2-phosphooxyethyl)-thiazole + 4-amino-2-methyl-5-(diphosphooxymethyl)pyrimidine + H(+) = thiamine phosphate + diphosphate. Its pathway is cofactor biosynthesis; thiamine diphosphate biosynthesis; thiamine phosphate from 4-amino-2-methyl-5-diphosphomethylpyrimidine and 4-methyl-5-(2-phosphoethyl)-thiazole: step 1/1. Its function is as follows. Condenses 4-methyl-5-(beta-hydroxyethyl)thiazole monophosphate (THZ-P) and 2-methyl-4-amino-5-hydroxymethyl pyrimidine pyrophosphate (HMP-PP) to form thiamine monophosphate (TMP). The chain is Thiamine-phosphate synthase from Deinococcus geothermalis (strain DSM 11300 / CIP 105573 / AG-3a).